Consider the following 299-residue polypeptide: Bifunctional protein FolD 2 (299 aa).

NADP(+) contacts are provided by residues 168–170 (GRS), Ser-193, and Ile-234.

It belongs to the tetrahydrofolate dehydrogenase/cyclohydrolase family. Homodimer.

The catalysed reaction is (6R)-5,10-methylene-5,6,7,8-tetrahydrofolate + NADP(+) = (6R)-5,10-methenyltetrahydrofolate + NADPH. It carries out the reaction (6R)-5,10-methenyltetrahydrofolate + H2O = (6R)-10-formyltetrahydrofolate + H(+). Its pathway is one-carbon metabolism; tetrahydrofolate interconversion. Its function is as follows. Catalyzes the oxidation of 5,10-methylenetetrahydrofolate to 5,10-methenyltetrahydrofolate and then the hydrolysis of 5,10-methenyltetrahydrofolate to 10-formyltetrahydrofolate. The sequence is that of Bifunctional protein FolD 2 from Rhizobium etli (strain ATCC 51251 / DSM 11541 / JCM 21823 / NBRC 15573 / CFN 42).